We begin with the raw amino-acid sequence, 131 residues long: Sperm microtubule inner protein 11 (131 aa).

Residues 18-44 (KKRNTTEETNQKEPEPTRLPPIISKDG) form a disordered region. Basic and acidic residues predominate over residues 21–33 (NTTEETNQKEPEP).

In terms of assembly, microtubule inner protein component of sperm flagellar doublet microtubules.

It is found in the cytoplasm. The protein resides in the cytoskeleton. The protein localises to the flagellum axoneme. Microtubule inner protein (MIP) part of the dynein-decorated doublet microtubules (DMTs) in flagellum axoneme. May serve to reinforce and thus stabilize the microtubule structure in the sperm flagella. The protein is Sperm microtubule inner protein 11 of Homo sapiens (Human).